The sequence spans 222 residues: Zinc finger C2HC domain-containing protein 1B (222 aa).

The C2HC/C3H-type 1 zinc finger occupies 14 to 43; the sequence is ELFPCEVCGRRFAADVLERHGPICKKLFNR. 4 residues coordinate Zn(2+): cysteine 18, cysteine 21, histidine 33, and cysteine 37. Residues 48 to 78 form a disordered region; that stretch reads FSSLKQRLQGTDIPTVKKTPQSKSPPVRKSN. The C2HC/C3H-type 2; degenerate zinc finger occupies 117–146; the sequence is DYIQRPYCMRRFNESAAERHTNFCKDQSSR. The interval 196-222 is disordered; the sequence is PTKSGLAMDPASGAKLRQGFSKSSKKD.

This sequence belongs to the ZC2HC1 family. Zn(2+) serves as cofactor.

In Homo sapiens (Human), this protein is Zinc finger C2HC domain-containing protein 1B (ZC2HC1B).